The sequence spans 235 residues: MSLLWQARFFTTVNHLRDLPKTQVPEIAFAGRSNAGKSTAINILCNQKKLAFASKTPGRTQHINYFSIGGAHVGQHRKDETKVDEIRALLVDLPGYGYAEVSGSAKLHWQELLGDYVQRREQLAALVLIVDSRRPFTELDIQMLEWFAPTGKPIHCLLTKSDKLNRNDAANALRTARTILGSYVDENGQPFPFTAQMFSALKRSGLDEANDKIIELLGLNEAPQEESNGPAANDV.

Positions Gln-23 to Leu-219 constitute an EngB-type G domain. Residues Gly-31–Ser-38, Gly-58–His-62, Asp-92–Gly-95, Thr-159–Asp-162, and Phe-193–Ala-200 each bind GTP. Residues Ser-38 and Thr-60 each contribute to the Mg(2+) site.

Belongs to the TRAFAC class TrmE-Era-EngA-EngB-Septin-like GTPase superfamily. EngB GTPase family. Requires Mg(2+) as cofactor.

Its function is as follows. Necessary for normal cell division and for the maintenance of normal septation. This Janthinobacterium sp. (strain Marseille) (Minibacterium massiliensis) protein is Probable GTP-binding protein EngB.